The sequence spans 282 residues: Acetyl-coenzyme A carboxylase carboxyl transferase subunit beta (282 aa).

Positions 29–282 (LMQRCPNCGL…LLKYGGMQDD (254 aa)) constitute a CoA carboxyltransferase N-terminal domain. Zn(2+) contacts are provided by Cys33, Cys36, Cys51, and Cys54. Residues 33-54 (CPNCGLEFFARRLDKYKTCPDC) form a C4-type zinc finger.

Belongs to the AccD/PCCB family. Acetyl-CoA carboxylase is a heterohexamer composed of biotin carboxyl carrier protein (AccB), biotin carboxylase (AccC) and two subunits each of ACCase subunit alpha (AccA) and ACCase subunit beta (AccD). Zn(2+) is required as a cofactor.

It is found in the cytoplasm. It catalyses the reaction N(6)-carboxybiotinyl-L-lysyl-[protein] + acetyl-CoA = N(6)-biotinyl-L-lysyl-[protein] + malonyl-CoA. The protein operates within lipid metabolism; malonyl-CoA biosynthesis; malonyl-CoA from acetyl-CoA: step 1/1. Its function is as follows. Component of the acetyl coenzyme A carboxylase (ACC) complex. Biotin carboxylase (BC) catalyzes the carboxylation of biotin on its carrier protein (BCCP) and then the CO(2) group is transferred by the transcarboxylase to acetyl-CoA to form malonyl-CoA. In Lactobacillus delbrueckii subsp. bulgaricus (strain ATCC BAA-365 / Lb-18), this protein is Acetyl-coenzyme A carboxylase carboxyl transferase subunit beta.